We begin with the raw amino-acid sequence, 378 residues long: Long-chain-fatty-acid--luciferin-component ligase (378 aa).

It belongs to the LuxE family.

The catalysed reaction is a long-chain fatty acid + L-cysteinyl-[protein] + ATP = an S-(long-chain fatty acyl)-L-cysteinyl-[protein] + AMP + diphosphate. The protein operates within lipid metabolism; fatty acid reduction for biolumincescence. In terms of biological role, acyl-protein synthetase activates tetradecanoic acid. It is a component of the fatty acid reductase complex responsible for converting tetradecanoic acid to the aldehyde which serves as substrate in the luciferase-catalyzed reaction. This chain is Long-chain-fatty-acid--luciferin-component ligase, found in Aliivibrio fischeri (Vibrio fischeri).